Consider the following 236-residue polypeptide: UPF0257 lipoprotein YnfC (236 aa).

An N-terminal signal peptide occupies residues 1-16 (MKYKLLPCLLAILLTG). Residue cysteine 17 is the site of N-palmitoyl cysteine attachment. Cysteine 17 carries S-diacylglycerol cysteine lipidation.

This sequence belongs to the UPF0257 family.

Its subcellular location is the cell membrane. This chain is UPF0257 lipoprotein YnfC, found in Escherichia coli O157:H7.